A 59-amino-acid chain; its full sequence is Preprotein translocase subunit SecG (59 aa).

Residues 1–33 lie on the Cytoplasmic side of the membrane; that stretch reads MARRESSGGSGGLMSSAGLMRYFEAEESAIKID. The helical transmembrane segment at 34–55 threads the bilayer; it reads PKTVIIAAVASGAFIWILNFTY. Over 56 to 59 the chain is Extracellular; sequence GRFW.

The protein belongs to the SEC61-beta family. As to quaternary structure, component of the protein translocase complex. Heterotrimer consisting of alpha (SecY), beta (SecG) and gamma (SecE) subunits. Can form oligomers of the heterotrimer.

The protein resides in the cell membrane. Functionally, involved in protein export. The function of the beta subunit is unknown, but it may be involved in stabilization of the trimeric complex. This is Preprotein translocase subunit SecG from Methanocella arvoryzae (strain DSM 22066 / NBRC 105507 / MRE50).